The chain runs to 865 residues: Alanine--tRNA ligase (865 aa).

Zn(2+) is bound by residues His552, His556, Cys654, and His658.

Belongs to the class-II aminoacyl-tRNA synthetase family. It depends on Zn(2+) as a cofactor.

It localises to the cytoplasm. It carries out the reaction tRNA(Ala) + L-alanine + ATP = L-alanyl-tRNA(Ala) + AMP + diphosphate. Functionally, catalyzes the attachment of alanine to tRNA(Ala) in a two-step reaction: alanine is first activated by ATP to form Ala-AMP and then transferred to the acceptor end of tRNA(Ala). Also edits incorrectly charged Ser-tRNA(Ala) and Gly-tRNA(Ala) via its editing domain. This Coxiella burnetii (strain RSA 331 / Henzerling II) protein is Alanine--tRNA ligase.